Reading from the N-terminus, the 108-residue chain is Replication restart protein PriB (108 aa).

The SSB domain occupies 8-108 (VDNRFSLIGK…LHAEQIEFIE (101 aa)).

The protein belongs to the PriB family. Homodimer. Interacts with PriA and DnaT. Component of the replication restart primosome. Primosome assembly occurs via a 'hand-off' mechanism. PriA binds to replication forks, subsequently PriB then DnaT bind; DnaT then displaces ssDNA to generate the helicase loading substrate.

In terms of biological role, involved in the restart of stalled replication forks, which reloads the replicative helicase on sites other than the origin of replication; the PriA-PriB pathway is the major replication restart pathway. During primosome assembly it facilitates complex formation between PriA and DnaT on DNA; stabilizes PriA on DNA. Stimulates the DNA unwinding activity of PriA helicase. The protein is Replication restart protein PriB of Histophilus somni (strain 2336) (Haemophilus somnus).